The sequence spans 284 residues: Shikimate dehydrogenase (NADP(+)) (284 aa).

Shikimate contacts are provided by residues 20-22 (SIS) and S67. The Proton acceptor role is filled by K71. Residue D83 participates in NADP(+) binding. Shikimate contacts are provided by N92 and D107. Residues 129–133 (GAGGA) and I227 contribute to the NADP(+) site. Y229 is a shikimate binding site. An NADP(+)-binding site is contributed by G250.

It belongs to the shikimate dehydrogenase family. Homodimer.

It catalyses the reaction shikimate + NADP(+) = 3-dehydroshikimate + NADPH + H(+). The protein operates within metabolic intermediate biosynthesis; chorismate biosynthesis; chorismate from D-erythrose 4-phosphate and phosphoenolpyruvate: step 4/7. Its function is as follows. Involved in the biosynthesis of the chorismate, which leads to the biosynthesis of aromatic amino acids. Catalyzes the reversible NADPH linked reduction of 3-dehydroshikimate (DHSA) to yield shikimate (SA). This chain is Shikimate dehydrogenase (NADP(+)), found in Streptococcus pneumoniae (strain Taiwan19F-14).